A 256-amino-acid polypeptide reads, in one-letter code: DNA repair protein RecO (256 aa).

This sequence belongs to the RecO family.

In terms of biological role, involved in DNA repair and RecF pathway recombination. The chain is DNA repair protein RecO from Rhizobium etli (strain CIAT 652).